The following is a 238-amino-acid chain: MAVIFENPQYVHVLRMLNSMPARDKTFRALQFVAKLLSWHLFYGGSSLSTVNKWKKLESNISFSRKLFSIGKVLDYICKVYFDSLKLQNPLSGNKSALPTISFTKDVAFAGYATAELIGWFNKTELMPCSHSKQISTIGKQCLAVALLSSCLAGCYELQQNSKKIKSATQEASEKDSTSLQTLQKERKEILFFALQNALDATIPLAELDILKVNDGFVAAAGITTSLMSVYKTWIGSY.

This sequence belongs to the peroxin-11 family.

It is found in the mitochondrion. It localises to the peroxisome membrane. Involved in peroxisomal proliferation. Promotes peroxisome division and biogenesis. This chain is Peroxisomal biogenesis factor 11 (pex11), found in Schizosaccharomyces pombe (strain 972 / ATCC 24843) (Fission yeast).